The sequence spans 872 residues: Alanine--tRNA ligase (872 aa).

Zn(2+)-binding residues include H567, H571, C669, and H673.

It belongs to the class-II aminoacyl-tRNA synthetase family. Zn(2+) is required as a cofactor.

Its subcellular location is the cytoplasm. The enzyme catalyses tRNA(Ala) + L-alanine + ATP = L-alanyl-tRNA(Ala) + AMP + diphosphate. Its function is as follows. Catalyzes the attachment of alanine to tRNA(Ala) in a two-step reaction: alanine is first activated by ATP to form Ala-AMP and then transferred to the acceptor end of tRNA(Ala). Also edits incorrectly charged Ser-tRNA(Ala) and Gly-tRNA(Ala) via its editing domain. This chain is Alanine--tRNA ligase, found in Streptococcus agalactiae serotype III (strain NEM316).